The primary structure comprises 420 residues: Melatonin receptor type 1C (420 aa).

At 1-34 (MMEVNSTCLDCRTPGTIRTEQDAQDSASQGLTSA) the chain is on the extracellular side. Residue asparagine 5 is glycosylated (N-linked (GlcNAc...) asparagine). A helical transmembrane segment spans residues 35-55 (LAVVLIFTIVVDVLGNILVIL). The Cytoplasmic segment spans residues 56-73 (SVLRNKKLQNAGNLFVVS). A helical transmembrane segment spans residues 74–94 (LSIADLVVAVYPYPVILIAIF). Over 95–106 (QNGWTLGNIHCQ) the chain is Extracellular. A disulfide bridge connects residues cysteine 105 and cysteine 182. A helical transmembrane segment spans residues 107–127 (ISGFLMGLSVIGSVFNITAIA). The Cytoplasmic portion of the chain corresponds to 128–152 (INRYCYICHSLRYDKLYNQRSTWCY). Residues 153–173 (LGLTWILTIIAIVPNFFVGSL) form a helical membrane-spanning segment. The Extracellular segment spans residues 174–192 (QYDPRIFSCTFAQTVSSSY). Residues 193–213 (TITVVVVHFIVPLSVVTFCYL) traverse the membrane as a helical segment. Residues 214–245 (RIWVLVIQVKHRVRQDFKQKLTQTDLRNFLTM) are Cytoplasmic-facing. A helical transmembrane segment spans residues 246–266 (FVVFVLFAVCWAPLNFIGLAV). Over 267-279 (AINPFHVAPKIPE) the chain is Extracellular. The helical transmembrane segment at 280 to 303 (WLFVLSYFMAYFNSCLNAVIYGVL) threads the bilayer. Over 304–420 (NQNFRKEYKR…ELCKDGISQR (117 aa)) the chain is Cytoplasmic.

Belongs to the G-protein coupled receptor 1 family. Moderately expressed in dermal melanophores.

It is found in the cell membrane. In terms of biological role, high affinity receptor for melatonin. Likely to mediate the potent effects of melatonin on pigment aggregation in melanophores. The activity of this receptor is mediated by pertussis toxin sensitive G proteins that inhibit adenylate cyclase activity. This is Melatonin receptor type 1C (mtnr1c) from Xenopus laevis (African clawed frog).